The chain runs to 284 residues: Bifunctional protein FolD (284 aa).

Residues glycine 166 to serine 168 and isoleucine 232 each bind NADP(+).

This sequence belongs to the tetrahydrofolate dehydrogenase/cyclohydrolase family. As to quaternary structure, homodimer.

It carries out the reaction (6R)-5,10-methylene-5,6,7,8-tetrahydrofolate + NADP(+) = (6R)-5,10-methenyltetrahydrofolate + NADPH. The catalysed reaction is (6R)-5,10-methenyltetrahydrofolate + H2O = (6R)-10-formyltetrahydrofolate + H(+). Its pathway is one-carbon metabolism; tetrahydrofolate interconversion. In terms of biological role, catalyzes the oxidation of 5,10-methylenetetrahydrofolate to 5,10-methenyltetrahydrofolate and then the hydrolysis of 5,10-methenyltetrahydrofolate to 10-formyltetrahydrofolate. The sequence is that of Bifunctional protein FolD from Shewanella sp. (strain ANA-3).